The sequence spans 509 residues: ATP synthase subunit alpha (509 aa).

169–176 (GDRQTGKT) lines the ATP pocket.

The protein belongs to the ATPase alpha/beta chains family. As to quaternary structure, F-type ATPases have 2 components, CF(1) - the catalytic core - and CF(0) - the membrane proton channel. CF(1) has five subunits: alpha(3), beta(3), gamma(1), delta(1), epsilon(1). CF(0) has three main subunits: a(1), b(2) and c(9-12). The alpha and beta chains form an alternating ring which encloses part of the gamma chain. CF(1) is attached to CF(0) by a central stalk formed by the gamma and epsilon chains, while a peripheral stalk is formed by the delta and b chains.

The protein localises to the cell inner membrane. It catalyses the reaction ATP + H2O + 4 H(+)(in) = ADP + phosphate + 5 H(+)(out). Functionally, produces ATP from ADP in the presence of a proton gradient across the membrane. The alpha chain is a regulatory subunit. The protein is ATP synthase subunit alpha of Rhizobium etli (strain CIAT 652).